The following is a 270-amino-acid chain: Formamidopyrimidine-DNA glycosylase (270 aa).

Catalysis depends on P2, which acts as the Schiff-base intermediate with DNA. E3 acts as the Proton donor in catalysis. K58 serves as the catalytic Proton donor; for beta-elimination activity. Residues H91, R110, and R151 each contribute to the DNA site. The FPG-type zinc-finger motif lies at 236–270 (AVYGREGEPCTHCGAPLQGVRIGGRATIYCSQCQR). R260 (proton donor; for delta-elimination activity) is an active-site residue.

It belongs to the FPG family. Monomer. It depends on Zn(2+) as a cofactor.

The catalysed reaction is Hydrolysis of DNA containing ring-opened 7-methylguanine residues, releasing 2,6-diamino-4-hydroxy-5-(N-methyl)formamidopyrimidine.. It carries out the reaction 2'-deoxyribonucleotide-(2'-deoxyribose 5'-phosphate)-2'-deoxyribonucleotide-DNA = a 3'-end 2'-deoxyribonucleotide-(2,3-dehydro-2,3-deoxyribose 5'-phosphate)-DNA + a 5'-end 5'-phospho-2'-deoxyribonucleoside-DNA + H(+). Functionally, involved in base excision repair of DNA damaged by oxidation or by mutagenic agents. Acts as a DNA glycosylase that recognizes and removes damaged bases. Has a preference for oxidized purines, such as 7,8-dihydro-8-oxoguanine (8-oxoG). Has AP (apurinic/apyrimidinic) lyase activity and introduces nicks in the DNA strand. Cleaves the DNA backbone by beta-delta elimination to generate a single-strand break at the site of the removed base with both 3'- and 5'-phosphates. The protein is Formamidopyrimidine-DNA glycosylase of Acidithiobacillus ferrooxidans (strain ATCC 23270 / DSM 14882 / CIP 104768 / NCIMB 8455) (Ferrobacillus ferrooxidans (strain ATCC 23270)).